The sequence spans 98 residues: NADH-ubiquinone oxidoreductase chain 4L (98 aa).

Transmembrane regions (helical) follow at residues 1–21, 29–49, and 61–81; these read MPSTYINILLAFTMALLGLLL, SLLCLEGLMLALFILSTLMAL, and IVLMVFAACEAALGLALLVMV.

Belongs to the complex I subunit 4L family. In terms of assembly, core subunit of respiratory chain NADH dehydrogenase (Complex I) which is composed of 45 different subunits.

Its subcellular location is the mitochondrion inner membrane. The catalysed reaction is a ubiquinone + NADH + 5 H(+)(in) = a ubiquinol + NAD(+) + 4 H(+)(out). Functionally, core subunit of the mitochondrial membrane respiratory chain NADH dehydrogenase (Complex I) which catalyzes electron transfer from NADH through the respiratory chain, using ubiquinone as an electron acceptor. Part of the enzyme membrane arm which is embedded in the lipid bilayer and involved in proton translocation. This chain is NADH-ubiquinone oxidoreductase chain 4L (MT-ND4L), found in Choloepus didactylus (Southern two-toed sloth).